Here is a 592-residue protein sequence, read N- to C-terminus: 3-hydroxy-3-methylglutaryl-coenzyme A reductase 1 (592 aa).

A disordered region spans residues 1–45; the sequence is MDLRRRPPKPPVTNNNNSNGSFRSYQPRTSDDDHRRRATTIAPPP. Polar residues predominate over residues 12 to 28; the sequence is VTNNNNSNGSFRSYQPR. N-linked (GlcNAc...) asparagine glycosylation is found at N16 and N19. 2 helical membrane passes run 47–69 and 97–117; these read ASDALPLPLYLTNAVFFTLFFSV and AIIALIASFIYLLGFFGIDFV. The tract at residues 118–171 is linker; the sequence is QSFISRASGDAWDLADTIDDDDHRLVTCSPPTPIVSVAKLPNPEPIVTESLPEE. Positions 172–592 are catalytic; sequence DEEIVKSVID…GATTTTTTTT (421 aa). The active-site Charge relay system is E265. N-linked (GlcNAc...) asparagine glycosylation is present at N329. Catalysis depends on charge relay system residues K397 and D473. The Proton donor role is filled by H571. An N-linked (GlcNAc...) asparagine glycan is attached at N575. Position 577 is a phosphoserine (S577).

Belongs to the HMG-CoA reductase family. Interacts (via N-terminus) with B''ALPHA and B''BETA. In terms of processing, inactivated by phosphorylation at Ser-577 by KIN10 activated form. Probably also phosphorylated at additional sites. Found in all tissues. Isoform Short is expressed at low levels specifically in flowers. Expressed in both the tapetum and microspores.

It localises to the endoplasmic reticulum membrane. It carries out the reaction (R)-mevalonate + 2 NADP(+) + CoA = (3S)-3-hydroxy-3-methylglutaryl-CoA + 2 NADPH + 2 H(+). It functions in the pathway metabolic intermediate biosynthesis; (R)-mevalonate biosynthesis; (R)-mevalonate from acetyl-CoA: step 3/3. Regulated at the post-translational level in response to alterations of sphingolipid and sterol biosynthetic pathways. Negatively regulated by a PP2A-dependent dephosphorylation occurring at a site different than Ser-577. Completely inhibited by mevinolin (IC(50) = 12.5 nM). Reversibly inactivated by phosphorylation at Ser-577 by spinach or Brassica oleracea HMGR kinases in a cell-free system. Down-regulated by KIN10 through its phosphorylation at Ser-577. In terms of biological role, catalyzes the synthesis of mevalonate, the specific precursor of all isoprenoid compounds present in plants. The protein is 3-hydroxy-3-methylglutaryl-coenzyme A reductase 1 of Arabidopsis thaliana (Mouse-ear cress).